We begin with the raw amino-acid sequence, 495 residues long: Geraniol 8-hydroxylase (495 aa).

A helical transmembrane segment spans residues 5 to 25; sequence FLTIAIGFLFTITLYQALNFF. Cys438 serves as a coordination point for heme.

This sequence belongs to the cytochrome P450 family. Heme serves as cofactor. Expressed in leaves, stems and roots.

The protein localises to the endoplasmic reticulum membrane. The enzyme catalyses (2E)-geraniol + reduced [NADPH--hemoprotein reductase] + O2 = (6E)-8-hydroxygeraniol + oxidized [NADPH--hemoprotein reductase] + H2O + H(+). Its function is as follows. Hydroxylase involved in the biosynthesis of hydroxygeraniol, a precursor of the iridoid monoterpenoid swertiamarin. In Swertia mussotii (Felwort), this protein is Geraniol 8-hydroxylase (CYP76B10).